The primary structure comprises 743 residues: Probable TonB-dependent receptor BfrD (743 aa).

The N-terminal stretch at 1–30 is a signal peptide; sequence MKFYSSHPMPESLAAAIAVPLLGLLPAAQA. One can recognise a TBDR plug domain in the interval 62 to 168; that stretch reads PLADTPRTVQ…AGGSINLVTK (107 aa). Positions 173-743 constitute a TBDR beta-barrel domain; that stretch reads QDFTEVQAGI…SAMLTFKLSY (571 aa). The TonB C-terminal box signature appears at 726-743; the sequence is YAALGPGRSAMLTFKLSY.

Belongs to the TonB-dependent receptor family.

It localises to the cell outer membrane. Probably involved in iron transport. In Bordetella pertussis (strain Tohama I / ATCC BAA-589 / NCTC 13251), this protein is Probable TonB-dependent receptor BfrD (bfrD).